Reading from the N-terminus, the 207-residue chain is Ras-related protein Rab-8B (207 aa).

Residues S17, G18, V19, G20, K21, T22, C23, T35, S39, and T40 each coordinate GTP. T22 lines the Mg(2+) pocket. 2 consecutive short sequence motifs (switch) follow at residues 31–45 (DAFN…GIDF) and 63–80 (DTAG…YYRG). Mg(2+)-binding residues include T40 and D63. G66 contributes to the GTP binding site. Position 72 is a phosphothreonine (T72). GTP-binding residues include N121, K122, D124, A152, and K153. Phosphoserine occurs at positions 180 and 183. Cysteine methyl ester is present on C204. Residue C204 is the site of S-geranylgeranyl cysteine attachment. Residues 205-207 (LLL) constitute a propeptide, removed in mature form.

This sequence belongs to the small GTPase superfamily. Rab family. As to quaternary structure, associated with actin, delta-catenin and alpha and beta tubulins. Interacts with OTOF. Interacts with PEX5R. Interacts with RAB3IP. Interacts with VIM. Interacts with CDH1. Interacts with MICALL2. Interacts with GDI1, GDI2, CHML and CHM; phosphorylation at Thr-72 disrupts these interactions. Interacts with MICAL1. Requires Mg(2+) as cofactor. In terms of processing, phosphorylation of Thr-72 in the switch II region by LRRK2 prevents the association of RAB regulatory proteins, including CHM, CHML and RAB GDP dissociation inhibitors GDI1 and GDI2.

The protein resides in the cell membrane. It localises to the cytoplasmic vesicle. Its subcellular location is the phagosome membrane. The protein localises to the endosome membrane. The catalysed reaction is GTP + H2O = GDP + phosphate + H(+). With respect to regulation, regulated by guanine nucleotide exchange factors (GEFs) including RAB3IP/RABIN8 which promotes the exchange of bound GDP for free GTP. Regulated by GTPase activating proteins (GAPs) which increase the GTP hydrolysis activity. Inhibited by GDP dissociation inhibitors (GDIs). The small GTPases Rab are key regulators of intracellular membrane trafficking, from the formation of transport vesicles to their fusion with membranes. Rabs cycle between an inactive GDP-bound form and an active GTP-bound form that is able to recruit to membranes different sets of downstream effectors directly responsible for vesicle formation, movement, tethering and fusion. RAB8B may be involved in polarized vesicular trafficking and neurotransmitter release. May participate in cell junction dynamics in Sertoli cells. May also participate in the export of a subset of neosynthesized proteins through a Rab8-Rab10-Rab11-dependent endososomal export route. In Bos taurus (Bovine), this protein is Ras-related protein Rab-8B (RAB8B).